We begin with the raw amino-acid sequence, 95 residues long: Putative defensin-like protein 252 (95 aa).

The N-terminal stretch at 1–27 is a signal peptide; the sequence is MRCVTSFVVLCILMFLVVNNVKVDVKA. 4 disulfide bridges follow: Cys34/Cys93, Cys45/Cys72, Cys56/Cys85, and Cys70/Cys87.

It belongs to the DEFL family.

The protein localises to the secreted. The chain is Putative defensin-like protein 252 (SCRL13) from Arabidopsis thaliana (Mouse-ear cress).